Here is a 305-residue protein sequence, read N- to C-terminus: MLKQRTIKSIVKTVGIGVHSGRKIELTLRPAAPGTGIVFSRVDLPTPVDIPASAMSIGDTRLASVLQKDGVRVSTVEHLMSACAGLGIDNLYVDVTAEEIPIMDGSAATFVFLIQSAGIEEQNAPKRFIKVTKPVEIRDGDKFARLDPYFGFKLKFSIDFRHPAVDKTGQELEVDFATTSYVREIARARTFGFAHEAEMLREIGLARGGSMDNAIVLDEYRILNNDGLRYDDEFVKHKMLDAIGDLYVIGHPLLASYTAYKSGHGLNNALLRELLAHEDAYEIVTFDDPQAAPKGFAFDAQTAFA.

Residues histidine 78, histidine 237, and aspartate 241 each coordinate Zn(2+). Histidine 264 serves as the catalytic Proton donor.

The protein belongs to the LpxC family. Zn(2+) serves as cofactor.

It carries out the reaction a UDP-3-O-[(3R)-3-hydroxyacyl]-N-acetyl-alpha-D-glucosamine + H2O = a UDP-3-O-[(3R)-3-hydroxyacyl]-alpha-D-glucosamine + acetate. The protein operates within glycolipid biosynthesis; lipid IV(A) biosynthesis; lipid IV(A) from (3R)-3-hydroxytetradecanoyl-[acyl-carrier-protein] and UDP-N-acetyl-alpha-D-glucosamine: step 2/6. Catalyzes the hydrolysis of UDP-3-O-myristoyl-N-acetylglucosamine to form UDP-3-O-myristoylglucosamine and acetate, the committed step in lipid A biosynthesis. This is UDP-3-O-acyl-N-acetylglucosamine deacetylase from Burkholderia cenocepacia (strain HI2424).